The chain runs to 389 residues: ATP phosphoribosyltransferase regulatory subunit (389 aa).

It belongs to the class-II aminoacyl-tRNA synthetase family. HisZ subfamily. As to quaternary structure, heteromultimer composed of HisG and HisZ subunits.

It is found in the cytoplasm. It participates in amino-acid biosynthesis; L-histidine biosynthesis; L-histidine from 5-phospho-alpha-D-ribose 1-diphosphate: step 1/9. Functionally, required for the first step of histidine biosynthesis. May allow the feedback regulation of ATP phosphoribosyltransferase activity by histidine. This chain is ATP phosphoribosyltransferase regulatory subunit, found in Moorella thermoacetica (strain ATCC 39073 / JCM 9320).